The primary structure comprises 617 residues: Sphingosine kinase 2 (617 aa).

The interval 1–140 is required for binding to sulfatide and phosphoinositides and for membrane localization; sequence MAPPPLLPVA…LSGDQEITPE (140 aa). The Nuclear localization signal motif lies at 87–95; that stretch reads RGRRGGRRR. The 148-residue stretch at 143–290 folds into the DAGKc domain; the sequence is PRKPRLLILV…LDLLSVTLAS (148 aa). ATP is bound by residues 153–155 and 185–189; these read NPF and TERQN. 210-213 is a binding site for substrate; the sequence is SGDG. The active-site Proton donor/acceptor is the Asp212. ATP-binding positions include Glu217 and 242–244; that span reads GSG. Asp309 provides a ligand contact to substrate. Residues Arg316 and Arg322 each contribute to the ATP site. Phosphoserine is present on residues Ser358 and Ser364. The disordered stretch occupies residues 371–472; the sequence is APAPAATHSP…GFLPPTHSAP (102 aa). Position 377 is a phosphothreonine (Thr377). Residues 381–390 carry the Nuclear export signal motif; the sequence is LHRSVSDLPL. A phosphoserine mark is found at Ser384 and Ser386. Over residues 412-426 the composition is skewed to gly residues; that stretch reads NGGGPELTGDWGGAG. Phosphothreonine is present on Thr578. An ATP-binding site is contributed by 586–588; sequence DGE.

Interacts with histone H3. Interacts with HDAC1, HDAC2, MBD2 and SIN3A. Interacts with EEF1A1; the interaction enhances SPHK2 kinase activity. Interacts with PHB2. Requires Mg(2+) as cofactor. In terms of processing, phosphorylated by PKD on Ser-384 and Ser-386 upon PMA treatment. Phosphorylation induces export from the nucleus to the cytoplasm. Phosphorylated by MAPK1 and MAPK2 at Thr-578, phosphorylation is induced by agonists such as EGF and PMA and increases kinase activity. Post-translationally, cleaved by CASP1 in apoptotic cells. The truncated form is released from cells. Expressed in heart, brain, liver, kidney and testis. Expressed by mast cells (at protein level). In the substantia nigra, expressed by dopaminergic neurons (at protein level).

Its subcellular location is the lysosome membrane. It localises to the cytoplasm. The protein localises to the cell membrane. The protein resides in the endoplasmic reticulum. It is found in the nucleus. Its subcellular location is the mitochondrion inner membrane. It carries out the reaction a sphingoid base + ATP = a sphingoid 1-phosphate + ADP + H(+). The catalysed reaction is sphing-4-enine + ATP = sphing-4-enine 1-phosphate + ADP + H(+). The enzyme catalyses sphinganine + ATP = sphinganine 1-phosphate + ADP + H(+). It catalyses the reaction (4R)-hydroxysphinganine + ATP = (4R)-hydroxysphinganine 1-phosphate + ADP + H(+). Functionally, catalyzes the phosphorylation of sphingosine to form sphingosine-1-phosphate (SPP), a lipid mediator with both intra- and extracellular functions. Also acts on D-erythro-dihydrosphingosine, D-erythro-sphingosine and L-threo-dihydrosphingosine. Binds phosphoinositides. In contrast to prosurvival SPHK1, has a positive effect on intracellular ceramide levels, inhibits cells growth and enhances apoptosis. In mitochondria, is important for cytochrome-c oxidase assembly and mitochondrial respiration. The SPP produced in mitochondria binds PHB2 and modulates the regulation via PHB2 of complex IV assembly and respiration. In nucleus, plays a role in epigenetic regulation of gene expression. Interacts with HDAC1 and HDAC2 and, through SPP production, inhibits their enzymatic activity, preventing the removal of acetyl groups from lysine residues with histones. Up-regulates acetylation of histone H3-K9, histone H4-K5 and histone H2B-K12. In nucleus, may have an inhibitory effect on DNA synthesis and cell cycle. In mast cells, is the main regulator of SPP production which mediates calcium influx, NF-kappa-B activation, cytokine production, such as TNF and IL6, and degranulation of mast cells. In dopaminergic neurons, is involved in promoting mitochondrial functions regulating ATP and ROS levels. Also involved in the regulation of glucose and lipid metabolism. The protein is Sphingosine kinase 2 of Mus musculus (Mouse).